The sequence spans 435 residues: Tol-Pal system protein TolB (435 aa).

The first 28 residues, 1-28 (MTKCSFFRAILVAVGLMTAAVFATPANA), serve as a signal peptide directing secretion. The tract at residues 288-310 (STAAIDTSPSYSPDGARVSFESD) is disordered.

Belongs to the TolB family. As to quaternary structure, the Tol-Pal system is composed of five core proteins: the inner membrane proteins TolA, TolQ and TolR, the periplasmic protein TolB and the outer membrane protein Pal. They form a network linking the inner and outer membranes and the peptidoglycan layer.

The protein localises to the periplasm. Functionally, part of the Tol-Pal system, which plays a role in outer membrane invagination during cell division and is important for maintaining outer membrane integrity. The sequence is that of Tol-Pal system protein TolB from Rhizobium johnstonii (strain DSM 114642 / LMG 32736 / 3841) (Rhizobium leguminosarum bv. viciae).